Reading from the N-terminus, the 414-residue chain is Probable elongation factor 1-gamma 1 (414 aa).

The GST N-terminal domain occupies Met1–Ser82. The region spanning Ser87–Ile215 is the GST C-terminal domain. A compositionally biased stretch (low complexity) spans Pro214–Ala224. The disordered stretch occupies residues Pro214–Leu260. Residues Lys225–Pro236 are compositionally biased toward basic and acidic residues. An EF-1-gamma C-terminal domain is found at Ala254 to Lys414.

In terms of assembly, EF-1 is composed of four subunits: alpha, beta, delta, and gamma.

Its function is as follows. Probably plays a role in anchoring the complex to other cellular components. The sequence is that of Probable elongation factor 1-gamma 1 from Arabidopsis thaliana (Mouse-ear cress).